The sequence spans 302 residues: Probable E3 ubiquitin-protein ligase RZFP34 (302 aa).

Residues Glu54–Val130 form a CHY-type zinc finger. Residues Cys61, His63, Cys74, Cys75, Cys81, Cys84, His85, His100, Cys112, Cys115, Cys125, Cys128, Cys137, Cys140, His153, Cys154, Cys157, Cys160, His170, Cys171, Cys174, Cys177, His186, and Cys188 each coordinate Zn(2+). Residues Met132–Asp196 form a CTCHY-type zinc finger. The RING-type; atypical zinc finger occupies Cys197–Ser240.

The protein localises to the nucleus. The catalysed reaction is S-ubiquitinyl-[E2 ubiquitin-conjugating enzyme]-L-cysteine + [acceptor protein]-L-lysine = [E2 ubiquitin-conjugating enzyme]-L-cysteine + N(6)-ubiquitinyl-[acceptor protein]-L-lysine.. The protein operates within protein modification; protein ubiquitination. In terms of biological role, possesses transactivation activity in yeast cells. Involved in the regulation of stomatal aperture. May modulate the expression of genes that control stomata opening during heat shock or drought stress. The sequence is that of Probable E3 ubiquitin-protein ligase RZFP34 from Oryza sativa subsp. japonica (Rice).